Here is a 501-residue protein sequence, read N- to C-terminus: Aldehyde dehydrogenase mpl4 (501 aa).

Position 231–236 (231–236) interacts with NAD(+); the sequence is GSTASG. Residues glutamate 253 and cysteine 287 contribute to the active site.

Belongs to the aldehyde dehydrogenase family.

It catalyses the reaction an aldehyde + NAD(+) + H2O = a carboxylate + NADH + 2 H(+). It participates in mycotoxin biosynthesis. Its function is as follows. Aldehyde dehydrogenase; part of the gene cluster that mediates the biosynthesis of the mycotoxin citrinin, a hepato-nephrotoxic compound to humans due to inhibition of respiration complex III. The pathway begins with the synthesis of a keto-aldehyde intermediate by the citrinin PKS (pksCT) from successive condensations of 4 malonyl-CoA units, presumably with a simple acetyl-CoA starter unit. Release of the keto-aldehyde intermediate is consistent with the presence of the C-terminal reductive release domain. Mp11 collaborates with pksCT by catalyzing the hydrolysis of ACP-bound acyl intermediates to free the ACP from stalled intermediates. Mpl2 then catalyzes the oxidation of the C-12 methyl of the ketone intermediate to an alcohol intermediate which is further oxidized by the oxidoreductase mpl7 to produce a bisaldehyde intermediate. The fourth catalytic step is catalyzed by the mpl4 aldehyde dehydrogenase. The final transformation is the reduction of C-3 by mpl6 to provide the chemically stable citrinin nucleus. The protein is Aldehyde dehydrogenase mpl4 of Monascus purpureus (Red mold).